Here is a 280-residue protein sequence, read N- to C-terminus: Large ribosomal subunit protein uL2 (280 aa).

Positions 226–280 are disordered; sequence NPIDHPHGGGEGRTSGGRHPVTPWGKPTKGAKTRNKKKASSQLIIRSRHAKKKGR. Basic residues-rich tracts occupy residues 254–264 and 271–280; these read KGAKTRNKKKA and RSRHAKKKGR.

Belongs to the universal ribosomal protein uL2 family. Part of the 50S ribosomal subunit. Forms a bridge to the 30S subunit in the 70S ribosome.

Functionally, one of the primary rRNA binding proteins. Required for association of the 30S and 50S subunits to form the 70S ribosome, for tRNA binding and peptide bond formation. It has been suggested to have peptidyltransferase activity; this is somewhat controversial. Makes several contacts with the 16S rRNA in the 70S ribosome. The chain is Large ribosomal subunit protein uL2 from Roseobacter denitrificans (strain ATCC 33942 / OCh 114) (Erythrobacter sp. (strain OCh 114)).